Reading from the N-terminus, the 179-residue chain is TM2 domain-containing protein Y66D12A.21 (179 aa).

An N-terminal signal peptide occupies residues 1-18; that stretch reads MRQLLLTLSLISVSASDA. The Extracellular segment spans residues 19–82; the sequence is TVKCDDLDPN…IFNRTVPSAC (64 aa). Asn75 carries an N-linked (GlcNAc...) asparagine glycan. Residues 83–105 traverse the membrane as a helical segment; the sequence is HYGAHVSYTTTVLLSIFLGFFGI. The 48-residue stretch at 88–135 folds into the TM2 domain; it reads VSYTTTVLLSIFLGFFGIDRIYLGYYALGLIKMFSLGGLFVFWLVDII. Residues 106-109 lie on the Cytoplasmic side of the membrane; sequence DRIY. A helical transmembrane segment spans residues 110–132; the sequence is LGYYALGLIKMFSLGGLFVFWLV. Residues 133 to 179 lie on the Extracellular side of the membrane; it reads DIILISLQLLGPADGTAYAMAYYGPKAQMIRFDSHTNFSFYTCDGCL. Asn169 carries N-linked (GlcNAc...) asparagine glycosylation.

It belongs to the TM2 family.

The protein resides in the membrane. The protein is TM2 domain-containing protein Y66D12A.21 of Caenorhabditis elegans.